Consider the following 429-residue polypeptide: Ribosomal RNA small subunit methyltransferase B (429 aa).

Residues 254-260 (CAAPGGK), aspartate 277, aspartate 303, and aspartate 322 each bind S-adenosyl-L-methionine. Catalysis depends on cysteine 375, which acts as the Nucleophile.

It belongs to the class I-like SAM-binding methyltransferase superfamily. RsmB/NOP family.

It is found in the cytoplasm. It catalyses the reaction cytidine(967) in 16S rRNA + S-adenosyl-L-methionine = 5-methylcytidine(967) in 16S rRNA + S-adenosyl-L-homocysteine + H(+). In terms of biological role, specifically methylates the cytosine at position 967 (m5C967) of 16S rRNA. The polypeptide is Ribosomal RNA small subunit methyltransferase B (Escherichia coli O127:H6 (strain E2348/69 / EPEC)).